The primary structure comprises 396 residues: Ribosomal RNA large subunit methyltransferase I (396 aa).

Residues Thr-2–Arg-81 enclose the PUA domain.

It belongs to the methyltransferase superfamily. RlmI family.

Its subcellular location is the cytoplasm. It carries out the reaction cytidine(1962) in 23S rRNA + S-adenosyl-L-methionine = 5-methylcytidine(1962) in 23S rRNA + S-adenosyl-L-homocysteine + H(+). Functionally, specifically methylates the cytosine at position 1962 (m5C1962) of 23S rRNA. This is Ribosomal RNA large subunit methyltransferase I from Serratia proteamaculans (strain 568).